Here is a 467-residue protein sequence, read N- to C-terminus: Argininosuccinate lyase 1 (467 aa).

The protein belongs to the lyase 1 family. Argininosuccinate lyase subfamily.

Its subcellular location is the cytoplasm. The enzyme catalyses 2-(N(omega)-L-arginino)succinate = fumarate + L-arginine. It participates in amino-acid biosynthesis; L-arginine biosynthesis; L-arginine from L-ornithine and carbamoyl phosphate: step 3/3. The polypeptide is Argininosuccinate lyase 1 (Rhizobium meliloti (strain 1021) (Ensifer meliloti)).